A 106-amino-acid chain; its full sequence is MSTAIAQQKIRIRLKAFDRRMLDLSCDKIIETADNTAATAIGPIPLPTKRKIYCVLRSPHVDKDSREHFETRTHRRIIDIYNPSAKTIDALMKLDLPSGVDIEVKL.

This sequence belongs to the universal ribosomal protein uS10 family. As to quaternary structure, part of the 30S ribosomal subunit.

Functionally, involved in the binding of tRNA to the ribosomes. The protein is Small ribosomal subunit protein uS10 of Prochlorococcus marinus (strain MIT 9211).